The sequence spans 398 residues: Phosphoglycerate kinase (398 aa).

Substrate-binding positions include 23 to 25 (DFN), R38, 61 to 64 (HMGK), R122, and R155. ATP contacts are provided by residues K206, G297, E328, and 354-357 (GGDS).

It belongs to the phosphoglycerate kinase family. As to quaternary structure, monomer.

It is found in the cytoplasm. It catalyses the reaction (2R)-3-phosphoglycerate + ATP = (2R)-3-phospho-glyceroyl phosphate + ADP. The protein operates within carbohydrate degradation; glycolysis; pyruvate from D-glyceraldehyde 3-phosphate: step 2/5. This is Phosphoglycerate kinase from Clostridium botulinum (strain Loch Maree / Type A3).